Here is a 177-residue protein sequence, read N- to C-terminus: Large ribosomal subunit protein uL6 (177 aa).

Residues glutamate 155–lysine 177 are disordered.

The protein belongs to the universal ribosomal protein uL6 family. Part of the 50S ribosomal subunit.

In terms of biological role, this protein binds to the 23S rRNA, and is important in its secondary structure. It is located near the subunit interface in the base of the L7/L12 stalk, and near the tRNA binding site of the peptidyltransferase center. The protein is Large ribosomal subunit protein uL6 of Bartonella tribocorum (strain CIP 105476 / IBS 506).